A 376-amino-acid polypeptide reads, in one-letter code: NADPH oxidase organizer 1 (376 aa).

The region spanning Met1–Leu131 is the PX domain. SH3 domains are found at residues Leu163–Pro225 and Ser237–Leu296. Residues Gly302–Gln376 form a disordered region. Pro residues predominate over residues Ala326–Pro335. Positions Pro328–Pro337 are proline-rich region; mediates mutually exclusive interactions with itself and NOXA1.

Interacts with NOX1, NOXA1, CYBA/p22phox and NCF2/p67phox. Interacts with SH3PXD2A and SH3PXD2B. In terms of tissue distribution, expressed in testis, small and large intestines, liver, kidney and pancreas. Isoform 3 is mainly expressed in colon. Isoform 1 is preferentially expressed in testis.

It localises to the cell membrane. Functionally, constitutively potentiates the superoxide-generating activity of NOX1 and NOX3 and is required for the biogenesis of otoconia/otolith, which are crystalline structures of the inner ear involved in the perception of gravity. Isoform 3 is more potent than isoform 1 in activating NOX3. Together with NOXA1, may also substitute to NCF1/p47phox and NCF2/p67phox in supporting the phagocyte NOX2/gp91phox superoxide-generating activity. This Homo sapiens (Human) protein is NADPH oxidase organizer 1 (NOXO1).